Here is a 117-residue protein sequence, read N- to C-terminus: MKMFTLLYLLTVVPGILSDVQLQESGPGLVKPSQSIALTCTVTGISITTGNYRWSWIRQFPGNKLEWIGYIYYSAITSYNPSPKSRTTITRDTSKNQFFLEMNSLTAEDTATYYCAR.

A signal peptide spans 1–18 (MKMFTLLYLLTVVPGILS). Positions 19–117 (DVQLQESGPG…EDTATYYCAR (99 aa)) constitute an Ig-like domain. Cysteines 40 and 115 form a disulfide.

The protein is Immunoglobulin heavy variable 3-5 of Mus musculus (Mouse).